A 5088-amino-acid chain; its full sequence is Replicase polyprotein 1ab (5088 aa).

Residues 26-46 form a helical membrane-spanning segment; the sequence is VTNVIQYWTPILTMLLLAIYI. The disordered stretch occupies residues 301–323; it reads EIEDDTEAEETQKTKRKGKLQPQ. The next 5 membrane-spanning stretches (helical) occupy residues 343-363, 1132-1152, 1156-1176, 1201-1221, and 1250-1270; these read HLTF…MSPT, GLFL…AITI, TMMM…HLLL, YGCL…LAYI, and ILIP…VSYV. Active-site for 3C-like proteinase residues include H1434 and C1539. 2 helical membrane-spanning segments follow: residues 1729–1749 and 1758–1778; these read FTHT…LFFV and ILSS…YGLV. A disordered region spans residues 3093 to 3112; sequence KPNCPMVPSEVPVRNKHKSA. Residues 4351–4616 enclose the ExoN domain; it reads MNIVMDDCIC…MTQCIYQSFV (266 aa). Catalysis depends on residues D4362, E4364, and D4481. Residues C4498, C4504, C4522, and H4525 each coordinate Zn(2+). Catalysis depends on residues H4599, D4604, K4880, D4969, K4998, and E5035. Residues 4844-5088 enclose the Nidovirus-type SAM-dependent 2'-O-MTase domain; that stretch reads LNNHAALAKA…RQSVFRYSPK (245 aa).

Homodimer. In terms of processing, specific enzymatic cleavages in vivo by its own protease yield mature proteins. 3CL-PRO is autocatalytically processed.

Its subcellular location is the membrane. The catalysed reaction is a 5'-end (5'-triphosphoguanosine)-ribonucleoside in mRNA + S-adenosyl-L-methionine = a 5'-end (N(7)-methyl 5'-triphosphoguanosine)-ribonucleoside in mRNA + S-adenosyl-L-homocysteine. It carries out the reaction RNA(n) + a ribonucleoside 5'-triphosphate = RNA(n+1) + diphosphate. The enzyme catalyses ATP + H2O = ADP + phosphate + H(+). It catalyses the reaction a 5'-end (N(7)-methyl 5'-triphosphoguanosine)-ribonucleoside in mRNA + S-adenosyl-L-methionine = a 5'-end (N(7)-methyl 5'-triphosphoguanosine)-(2'-O-methyl-ribonucleoside) in mRNA + S-adenosyl-L-homocysteine + H(+). In terms of biological role, cysteine protease responsible for the majority of cleavages of the polyprotein. Recognizes substrates containing the core sequence [NT]-[EHKQSY]-|-[AGNST]. Functionally, the helicase which contains a zinc finger structure displays RNA and DNA duplex-unwinding activities with 5' to 3' polarity. Its function is as follows. RNA-directed RNA polymerase that catalyzes the transcription of viral genomic and subgenomic RNAs. Catalyzes the RNA N7-guanylyltransferase reaction to methylate the core cap structure GpppN-RNA into the type-0 cap (m)GpppN-RNA. In Ochlerotatus harrisoni (CAVV), this protein is Replicase polyprotein 1ab.